The chain runs to 353 residues: Quinolinate synthase (353 aa).

The iminosuccinate site is built by His-47 and Ser-68. A [4Fe-4S] cluster-binding site is contributed by Cys-113. Iminosuccinate-binding positions include 139–141 (YAN) and Ser-156. Residue Cys-200 coordinates [4Fe-4S] cluster. Residues 226 to 228 (HPE) and Thr-243 each bind iminosuccinate. A [4Fe-4S] cluster-binding site is contributed by Cys-297.

It belongs to the quinolinate synthase family. Type 1 subfamily. [4Fe-4S] cluster is required as a cofactor.

The protein localises to the cytoplasm. It carries out the reaction iminosuccinate + dihydroxyacetone phosphate = quinolinate + phosphate + 2 H2O + H(+). It functions in the pathway cofactor biosynthesis; NAD(+) biosynthesis; quinolinate from iminoaspartate: step 1/1. Its function is as follows. Catalyzes the condensation of iminoaspartate with dihydroxyacetone phosphate to form quinolinate. The chain is Quinolinate synthase from Photobacterium profundum (strain SS9).